We begin with the raw amino-acid sequence, 322 residues long: Quinolinate synthase (322 aa).

Iminosuccinate-binding residues include histidine 37 and serine 54. Cysteine 99 is a [4Fe-4S] cluster binding site. Iminosuccinate-binding positions include 125–127 (YIN) and serine 142. A [4Fe-4S] cluster-binding site is contributed by cysteine 185. Residues 211–213 (HPE) and threonine 228 each bind iminosuccinate. Cysteine 278 contributes to the [4Fe-4S] cluster binding site.

Belongs to the quinolinate synthase family. Type 2 subfamily. [4Fe-4S] cluster serves as cofactor.

Its subcellular location is the cytoplasm. It carries out the reaction iminosuccinate + dihydroxyacetone phosphate = quinolinate + phosphate + 2 H2O + H(+). It participates in cofactor biosynthesis; NAD(+) biosynthesis; quinolinate from iminoaspartate: step 1/1. Its function is as follows. Catalyzes the condensation of iminoaspartate with dihydroxyacetone phosphate to form quinolinate. The sequence is that of Quinolinate synthase from Prosthecochloris aestuarii (strain DSM 271 / SK 413).